A 208-amino-acid chain; its full sequence is Large ribosomal subunit protein uL3 (208 aa).

Residues 126-150 (NQSRGPMAHGSRYHRRPGSMGPVAP) form a disordered region.

The protein belongs to the universal ribosomal protein uL3 family. In terms of assembly, part of the 50S ribosomal subunit. Forms a cluster with proteins L14 and L19.

In terms of biological role, one of the primary rRNA binding proteins, it binds directly near the 3'-end of the 23S rRNA, where it nucleates assembly of the 50S subunit. In Exiguobacterium sibiricum (strain DSM 17290 / CCUG 55495 / CIP 109462 / JCM 13490 / 255-15), this protein is Large ribosomal subunit protein uL3.